A 214-amino-acid chain; its full sequence is Thymidylate kinase (214 aa).

10–17 (GGEGVGKT) contributes to the ATP binding site.

The protein belongs to the thymidylate kinase family.

It catalyses the reaction dTMP + ATP = dTDP + ADP. Its function is as follows. Phosphorylation of dTMP to form dTDP in both de novo and salvage pathways of dTTP synthesis. The chain is Thymidylate kinase from Bartonella quintana (strain Toulouse) (Rochalimaea quintana).